Reading from the N-terminus, the 482-residue chain is Retinoic acid receptor beta (482 aa).

Residues 1 to 114 are modulating; it reads MSTSSHACPV…PLPPPRVYKP (114 aa). Ser104 is modified (phosphoserine). 2 NR C4-type zinc fingers span residues 115-135 and 151-175; these read CFVCQDKSSGYHYGVSACEGC and CHRDKNCVINKVTRNRCQYCRLQKC. The nuclear receptor DNA-binding region spans 115-180; it reads CFVCQDKSSG…RLQKCFEVGM (66 aa). Residues 181–209 form a hinge region; the sequence is SKESVRNDRNKKKKEPSKQECTESYEMTA. The region spanning 210-444 is the NR LBD domain; the sequence is ELDDLTEKIR…PLIQEMLENS (235 aa). The tract at residues 443–482 is disordered; sequence NSEGHEPLTPSSSGNIAEHSPSVSPSSVENSGVSQSPLLQ. Over residues 462–482 the composition is skewed to low complexity; that stretch reads SPSVSPSSVENSGVSQSPLLQ.

This sequence belongs to the nuclear hormone receptor family. NR1 subfamily. In terms of assembly, homodimer. Heterodimer; with a RXR molecule. Binds DNA preferentially as a RAR/RXR heterodimer. Heterodimerizes (via NR LBD) with RXRA. Interacts weakly with NCOR2.

It localises to the nucleus. Its subcellular location is the cytoplasm. Functionally, receptor for retinoic acid. Retinoic acid receptors bind as heterodimers to their target response elements in response to their ligands, all-trans or 9-cis retinoic acid, and regulate gene expression in various biological processes. The RAR/RXR heterodimers bind to the retinoic acid response elements (RARE) composed of tandem 5'-AGGTCA-3' sites known as DR1-DR5. In the absence of ligand, acts mainly as an activator of gene expression due to weak binding to corepressors. The RXRA/RARB heterodimer can act as a repressor on the DR1 element and as an activator on the DR5 element. In concert with RARG, required for skeletal growth, matrix homeostasis and growth plate function. The polypeptide is Retinoic acid receptor beta (Rarb) (Mus musculus (Mouse)).